A 286-amino-acid polypeptide reads, in one-letter code: Divergent deoxyribose-phosphate aldolase-like protein (286 aa).

In terms of assembly, homodimer. Interacts with ADF; the interaction enhances ADF activity in disassembly of filamentous actin and inhibition of actin polymerization.

The protein resides in the cytoplasm. In terms of biological role, involved in regulation of actin dynamics. In Toxoplasma gondii, this protein is Divergent deoxyribose-phosphate aldolase-like protein.